Here is a 127-residue protein sequence, read N- to C-terminus: Large ribosomal subunit protein uL22 (127 aa).

Belongs to the universal ribosomal protein uL22 family. Part of the 50S ribosomal subunit.

Its function is as follows. This protein binds specifically to 23S rRNA; its binding is stimulated by other ribosomal proteins, e.g. L4, L17, and L20. It is important during the early stages of 50S assembly. It makes multiple contacts with different domains of the 23S rRNA in the assembled 50S subunit and ribosome. The globular domain of the protein is located near the polypeptide exit tunnel on the outside of the subunit, while an extended beta-hairpin is found that lines the wall of the exit tunnel in the center of the 70S ribosome. The polypeptide is Large ribosomal subunit protein uL22 (Methylobacterium nodulans (strain LMG 21967 / CNCM I-2342 / ORS 2060)).